We begin with the raw amino-acid sequence, 302 residues long: Ubiquinone biosynthesis protein COQ4, mitochondrial (302 aa).

The transit peptide at 1–19 directs the protein to the mitochondrion; sequence MNSSPARAVRALVQSQSRQ. Positions 176, 177, 180, and 192 each coordinate Zn(2+). Residues 268 to 282 are compositionally biased toward basic and acidic residues; it reads PPPDMRDARKRERDA. The interval 268–302 is disordered; that stretch reads PPPDMRDARKRERDARRRRKQLETEAQQGLDAASL.

The protein belongs to the COQ4 family. Component of a multi-subunit COQ enzyme complex, composed of at least COQ3, COQ4, COQ5, COQ6, COQ7 and COQ9. The cofactor is Zn(2+).

It is found in the mitochondrion inner membrane. It carries out the reaction a 4-hydroxy-3-methoxy-5-(all-trans-polyprenyl)benzoate + H(+) = a 2-methoxy-6-(all-trans-polyprenyl)phenol + CO2. Its pathway is cofactor biosynthesis; ubiquinone biosynthesis. Its function is as follows. Lyase that catalyzes the C1-decarboxylation of 4-hydroxy-3-methoxy-5-(all-trans-polyprenyl)benzoic acid into 2-methoxy-6-(all-trans-polyprenyl)phenol during ubiquinone biosynthesis. In Pyricularia oryzae (strain 70-15 / ATCC MYA-4617 / FGSC 8958) (Rice blast fungus), this protein is Ubiquinone biosynthesis protein COQ4, mitochondrial.